Consider the following 139-residue polypeptide: Nucleoside diphosphate kinase (139 aa).

6 residues coordinate ATP: K11, F59, R87, T93, R104, and N114. Residue H117 is the Pros-phosphohistidine intermediate of the active site.

It belongs to the NDK family. Homotetramer. It depends on Mg(2+) as a cofactor.

It is found in the cytoplasm. The enzyme catalyses a 2'-deoxyribonucleoside 5'-diphosphate + ATP = a 2'-deoxyribonucleoside 5'-triphosphate + ADP. The catalysed reaction is a ribonucleoside 5'-diphosphate + ATP = a ribonucleoside 5'-triphosphate + ADP. Major role in the synthesis of nucleoside triphosphates other than ATP. The ATP gamma phosphate is transferred to the NDP beta phosphate via a ping-pong mechanism, using a phosphorylated active-site intermediate. This is Nucleoside diphosphate kinase from Wolbachia sp. subsp. Drosophila simulans (strain wRi).